The sequence spans 209 residues: uncharacterized protein (209 aa).

4Fe-4S ferredoxin-type domains follow at residues 38 to 67, 63 to 92, 90 to 119, 122 to 151, 145 to 174, and 179 to 209; these read KTKP…IFSF, KIFS…KDRF, DRFT…KEIP, KTPV…EINP, INKE…TPDE, and LIVK…HRES. [4Fe-4S] cluster contacts are provided by Cys47, Cys50, Cys53, Cys57, Cys72, Cys75, Cys78, Cys82, Cys99, Cys102, Cys105, and Cys109. Positions 154, 157, 160, 164, 188, 191, 194, and 198 each coordinate [4Fe-4S] cluster.

This is an uncharacterized protein from Methanocaldococcus jannaschii (strain ATCC 43067 / DSM 2661 / JAL-1 / JCM 10045 / NBRC 100440) (Methanococcus jannaschii).